The following is a 317-amino-acid chain: Hairy/enhancer-of-split related with YRPW motif protein 1 (317 aa).

The interval 1 to 59 is disordered; that stretch reads MKRNHDFSSSDSELDENIEVEKESADENAGANSPLGSMSPSTTSQVQARKRRRGIIEKR. A compositionally biased stretch (polar residues) spans 30–47; the sequence is GANSPLGSMSPSTTSQVQ. Residues 48–103 form the bHLH domain; the sequence is ARKRRRGIIEKRRRDRINNSLSELRRLVPSAFEKQGSAKLEKAEILQMTVDHLKML. Residues 121 to 157 form the Orange domain; sequence YRGLGFRECLAETARYLSIIEGLDNTDPLRIRLVSHL. Composition is skewed to low complexity over residues 193–226 and 248–264; these read QQQQ…SAPS and PPST…TASK. The segment at 193 to 264 is disordered; the sequence is QQQQQQGAPL…PGLTPPTASK (72 aa). The YRPW motif signature appears at 307 to 310; sequence YRPW.

This sequence belongs to the HEY family.

Its subcellular location is the nucleus. Functionally, transcriptional repressor which functions as a downstream effector of Notch signaling. The polypeptide is Hairy/enhancer-of-split related with YRPW motif protein 1 (hey1) (Danio rerio (Zebrafish)).